Here is a 433-residue protein sequence, read N- to C-terminus: UPF0597 protein DNO_0106 (433 aa).

Belongs to the UPF0597 family.

The polypeptide is UPF0597 protein DNO_0106 (Dichelobacter nodosus (strain VCS1703A)).